The chain runs to 110 residues: MSTSELATSYAALILADDGVDITADKLQSLIKAAKIEEVEPIWTTLFAKALEGKDVKDLLLNVGSGGGAAPLPEALLLRWRAADAAPAAEEKKEEEKEESDEDMGFGLFD.

A disordered region spans residues 87-110 (PAAEEKKEEEKEESDEDMGFGLFD).

The protein belongs to the eukaryotic ribosomal protein P1/P2 family. In terms of assembly, P1 and P2 exist as dimers at the large ribosomal subunit. In terms of processing, phosphorylated.

In terms of biological role, plays an important role in the elongation step of protein synthesis. The polypeptide is Large ribosomal subunit protein P1 (ALTA12) (Alternaria alternata (Alternaria rot fungus)).